The following is a 418-amino-acid chain: Beta-arrestin-1 (418 aa).

Positions 1 to 163 are interaction with SRC; that stretch reads MGDKGTRVFK…LEEKIHKRNS (163 aa). The interaction with CHRM2 stretch occupies residues 45-86; the sequence is PEYLKERRVYVTLTCAFRYGREDLDVLGLTFRKDLFVANVQS. A Phosphotyrosine modification is found at Tyr-47. 4 residues coordinate 1D-myo-inositol hexakisphosphate: Lys-250, Met-255, Lys-324, and Lys-326. The tract at residues 318–418 is interaction with TRAF6; that stretch reads IVSYKVKVKL…GTGSPRLNDR (101 aa). The tract at residues 353-375 is disordered; that stretch reads HPKPKEEPPHREVPEHETPVDTN. Residues 355–371 are compositionally biased toward basic and acidic residues; the sequence is KPKEEPPHREVPEHETP. Residues 385-395 carry the [DE]-X(1,2)-F-X-X-[FL]-X-X-X-R motif motif; the sequence is DIVFEDFARQR. The tract at residues 397–418 is disordered; that stretch reads KGMKDDKEEEEDGTGSPRLNDR. At Ser-412 the chain carries Phosphoserine; by GRK5.

Belongs to the arrestin family. As to quaternary structure, monomer. Homodimer. Homooligomer; the self-association is mediated by InsP6-binding. Heterooligomer with ARRB2; the association is mediated by InsP6-binding. Interacts with ADRB2 (phosphorylated). Interacts with CHRM2 (phosphorylated). Interacts with LHCGR. Interacts with CYTH2 and CASR. Interacts with AP2B1 (dephosphorylated at 'Tyr-737'); phosphorylation of AP2B1 at 'Tyr-737' disrupts the interaction. Interacts (dephosphorylated at Ser-412) with CLTC. Interacts with CCR2 and GRK2. Interacts with CRR5. Interacts with PTAFR (phosphorylated on serine residues). Interacts with CLTC and MAP2K3. Interacts with CREB1. Interacts with TRAF6. Interacts with IGF1R and MDM2. Interacts with C5AR1. Interacts with PDE4D. Interacts with SRC (via the SH3 domain and the protein kinase domain); the interaction is independent of the phosphorylation state of SRC C-terminus. Interacts with TACR1. Interacts with RAF1. Interacts with CHUK, IKBKB and MAP3K14. Interacts with DVL1; the interaction is enhanced by phosphorylation of DVL1. Interacts with DVL2; the interaction is enhanced by phosphorylation of DVL2. Interacts with IGF1R. Associates with MAP kinase p38. Part of a MAPK signaling complex consisting of TACR1, ARRB1, SRC, MAPK1 (activated) and MAPK3 (activated). Part of a MAPK signaling complex consisting of F2RL1, ARRB1, RAF1, MAPK1 (activated) and MAPK3 (activated). Interacts with GPR143. Interacts with MAP2K4/MKK4. Interacts with HCK and CXCR1 (phosphorylated). Interacts with ACKR3 and ACKR4. Interacts with ARRDC1; the interaction is direct. Interacts with GPR61, GPR62 and GPR135. In terms of processing, constitutively phosphorylated at Ser-412 in the cytoplasm. At the plasma membrane, is rapidly dephosphorylated, a process that is required for clathrin binding and ADRB2 endocytosis but not for ADRB2 binding and desensitization. Once internalized, is rephosphorylated. The ubiquitination status appears to regulate the formation and trafficking of beta-arrestin-GPCR complexes and signaling. Ubiquitination appears to occur GPCR-specific. Ubiquitinated by MDM2; the ubiquitination is required for rapid internalization of ADRB2. Deubiquitinated by USP33; the deubiquitination leads to a dissociation of the beta-arrestin-GPCR complex. Stimulation of a class A GPCR, such as ADRB2, induces transient ubiquitination and subsequently promotes association with USP33. As to expression, beta-arrestin 1A is found in cortex, cerebellum, striatum, pineal gland, retina and heart. Beta-arrestin 1B is found in spleen, lung, pituitary and kidney.

It is found in the cytoplasm. It localises to the nucleus. The protein resides in the cell membrane. The protein localises to the membrane. Its subcellular location is the clathrin-coated pit. It is found in the cell projection. It localises to the pseudopodium. The protein resides in the cytoplasmic vesicle. Its function is as follows. Functions in regulating agonist-mediated G-protein coupled receptor (GPCR) signaling by mediating both receptor desensitization and resensitization processes. During homologous desensitization, beta-arrestins bind to the GPRK-phosphorylated receptor and sterically preclude its coupling to the cognate G-protein; the binding appears to require additional receptor determinants exposed only in the active receptor conformation. The beta-arrestins target many receptors for internalization by acting as endocytic adapters (CLASPs, clathrin-associated sorting proteins) and recruiting the GPRCs to the adapter protein 2 complex 2 (AP-2) in clathrin-coated pits (CCPs). However, the extent of beta-arrestin involvement appears to vary significantly depending on the receptor, agonist and cell type. Internalized arrestin-receptor complexes traffic to intracellular endosomes, where they remain uncoupled from G-proteins. Two different modes of arrestin-mediated internalization occur. Class A receptors, like ADRB2, OPRM1, ENDRA, D1AR and ADRA1B dissociate from beta-arrestin at or near the plasma membrane and undergo rapid recycling. Class B receptors, like AVPR2, AGTR1, NTSR1, TRHR and TACR1 internalize as a complex with arrestin and traffic with it to endosomal vesicles, presumably as desensitized receptors, for extended periods of time. Receptor resensitization then requires that receptor-bound arrestin is removed so that the receptor can be dephosphorylated and returned to the plasma membrane. Involved in internalization of P2RY4 and UTP-stimulated internalization of P2RY2. Involved in phosphorylation-dependent internalization of OPRD1 ands subsequent recycling. Involved in the degradation of cAMP by recruiting cAMP phosphodiesterases to ligand-activated receptors. Beta-arrestins function as multivalent adapter proteins that can switch the GPCR from a G-protein signaling mode that transmits short-lived signals from the plasma membrane via small molecule second messengers and ion channels to a beta-arrestin signaling mode that transmits a distinct set of signals that are initiated as the receptor internalizes and transits the intracellular compartment. Acts as a signaling scaffold for MAPK pathways such as MAPK1/3 (ERK1/2). ERK1/2 activated by the beta-arrestin scaffold is largely excluded from the nucleus and confined to cytoplasmic locations such as endocytic vesicles, also called beta-arrestin signalosomes. Recruits c-Src/SRC to ADRB2 resulting in ERK activation. GPCRs for which the beta-arrestin-mediated signaling relies on both ARRB1 and ARRB2 (codependent regulation) include ADRB2, F2RL1 and PTH1R. For some GPCRs the beta-arrestin-mediated signaling relies on either ARRB1 or ARRB2 and is inhibited by the other respective beta-arrestin form (reciprocal regulation). Inhibits ERK1/2 signaling in AGTR1- and AVPR2-mediated activation (reciprocal regulation). Is required for SP-stimulated endocytosis of NK1R and recruits c-Src/SRC to internalized NK1R resulting in ERK1/2 activation, which is required for the antiapoptotic effects of SP. Is involved in proteinase-activated F2RL1-mediated ERK activity. Acts as a signaling scaffold for the AKT1 pathway. Is involved in alpha-thrombin-stimulated AKT1 signaling. Is involved in IGF1-stimulated AKT1 signaling leading to increased protection from apoptosis. Involved in activation of the p38 MAPK signaling pathway and in actin bundle formation. Involved in F2RL1-mediated cytoskeletal rearrangement and chemotaxis. Involved in AGTR1-mediated stress fiber formation by acting together with GNAQ to activate RHOA. Appears to function as signaling scaffold involved in regulation of MIP-1-beta-stimulated CCR5-dependent chemotaxis. Involved in attenuation of NF-kappa-B-dependent transcription in response to GPCR or cytokine stimulation by interacting with and stabilizing CHUK. May serve as nuclear messenger for GPCRs. Involved in OPRD1-stimulated transcriptional regulation by translocating to CDKN1B and FOS promoter regions and recruiting EP300 resulting in acetylation of histone H4. Involved in regulation of LEF1 transcriptional activity via interaction with DVL1 and/or DVL2 Also involved in regulation of receptors other than GPCRs. Involved in Toll-like receptor and IL-1 receptor signaling through the interaction with TRAF6 which prevents TRAF6 autoubiquitination and oligomerization required for activation of NF-kappa-B and JUN. Involved in IL8-mediated granule release in neutrophils. Binds phosphoinositides. Binds inositol hexakisphosphate (InsP6). Required for atypical chemokine receptor ACKR2-induced RAC1-LIMK1-PAK1-dependent phosphorylation of cofilin (CFL1) and for the up-regulation of ACKR2 from endosomal compartment to cell membrane, increasing its efficiency in chemokine uptake and degradation. Involved in the internalization of the atypical chemokine receptor ACKR3. Negatively regulates the NOTCH signaling pathway by mediating the ubiquitination and degradation of NOTCH1 by ITCH. Participates in the recruitment of the ubiquitin-protein ligase to the receptor. The sequence is that of Beta-arrestin-1 (ARRB1) from Bos taurus (Bovine).